We begin with the raw amino-acid sequence, 369 residues long: Actin-related protein 2/3 complex subunit 1B-A (369 aa).

WD repeat units lie at residues Phe-6–Ile-45, Glu-50–Thr-89, Arg-94–Lys-135, Pro-140–Arg-179, Ser-200–Ser-239, Thr-242–Gly-282, and Leu-321–Lys-364.

This sequence belongs to the WD repeat ARPC1 family. In terms of assembly, component of the Arp2/3 complex composed of actr2/arp2, actr3/arp3, arpc1 (arpc1a or arpc1b), arpc2, arpc3, arpc4 and arpc5.

Its subcellular location is the cytoplasm. It localises to the cytoskeleton. It is found in the nucleus. In terms of biological role, component of the Arp2/3 complex, a multiprotein complex that mediates actin polymerization upon stimulation by nucleation-promoting factor (NPF). The Arp2/3 complex mediates the formation of branched actin networks in the cytoplasm, providing the force for cell motility. In addition to its role in the cytoplasmic cytoskeleton, the Arp2/3 complex also promotes actin polymerization in the nucleus, thereby regulating gene transcription and repair of damaged DNA. The Arp2/3 complex promotes homologous recombination (HR) repair in response to DNA damage by promoting nuclear actin polymerization, leading to drive motility of double-strand breaks (DSBs). The chain is Actin-related protein 2/3 complex subunit 1B-A (arpc1b-a) from Xenopus laevis (African clawed frog).